The chain runs to 760 residues: 5-methyltetrahydropteroyltriglutamate--homocysteine methyltransferase (760 aa).

Residues 15–18 and Lys-114 each bind 5-methyltetrahydropteroyltri-L-glutamate; that span reads RELK. L-homocysteine is bound by residues 436–438 and Glu-489; that span reads IGS. L-methionine contacts are provided by residues 436–438 and Glu-489; that span reads IGS. 5-methyltetrahydropteroyltri-L-glutamate is bound by residues 520–521 and Trp-566; that span reads RC. L-homocysteine is bound at residue Asp-604. Residue Asp-604 coordinates L-methionine. Glu-610 contacts 5-methyltetrahydropteroyltri-L-glutamate. Residues His-646, Cys-648, and Glu-670 each contribute to the Zn(2+) site. The Proton donor role is filled by His-699. Cys-731 lines the Zn(2+) pocket.

The protein belongs to the vitamin-B12 independent methionine synthase family. Requires Zn(2+) as cofactor.

The enzyme catalyses 5-methyltetrahydropteroyltri-L-glutamate + L-homocysteine = tetrahydropteroyltri-L-glutamate + L-methionine. It functions in the pathway amino-acid biosynthesis; L-methionine biosynthesis via de novo pathway; L-methionine from L-homocysteine (MetE route): step 1/1. Catalyzes the transfer of a methyl group from 5-methyltetrahydrofolate to homocysteine resulting in methionine formation. This is 5-methyltetrahydropteroyltriglutamate--homocysteine methyltransferase from Shewanella oneidensis (strain ATCC 700550 / JCM 31522 / CIP 106686 / LMG 19005 / NCIMB 14063 / MR-1).